The following is a 67-amino-acid chain: LPS-assembly lipoprotein LptM (67 aa).

The N-terminal stretch at 1-19 (MKNVFKTLAVLLTLFSLTG) is a signal peptide. Cys-20 is lipidated: N-palmitoyl cysteine. The S-diacylglycerol cysteine moiety is linked to residue Cys-20. The segment at 26-67 (LYFPPADKNAPPPTKKVDSQTQSTMPDKNDRATGDGPSQVNY) is disordered.

It belongs to the LptM family. Interacts with the outer membrane embedded portion of the LPS translocon formed by LptD and LptE (LptDE).

The protein resides in the cell outer membrane. In terms of biological role, component of the lipopolysaccharide (LPS) transport (Lpt) pathway that promotes efficient assembly of the outer membrane LPS translocon (LptDE) by the BAM complex. Facilitates oxidative maturation of LptD by stabilizing a conformation of the LPS translocon in which LptD can efficiently acquire native disulfide bonds, thereby activating the LPS translocon. The sequence is that of LPS-assembly lipoprotein LptM from Salmonella typhi.